Here is a 443-residue protein sequence, read N- to C-terminus: MDRARLWLGLLLPVVAALDFRYHHQEGMEAFLKSVAQNYSSITHLHSIGKSVRGRNLWVLVVGQTPKEHRVGIPEFKYVANMHGDETVGRELLLHLIDYLVSSYRKDPEITHLIDSTRIHIMPSMNPDGFEAVQKPDCYYSNGRENYNNYDLNRNFPDAFENNNVTKQPETLAIMEWLKTETFVLSANLHGGALVASYPFDNGVQATGTLLSRSLTPDDDVFQHLAYTYASRNPNMTKGDQCKNKRNFPNGIINGYSWYPLQGGMQDYNYIWAQCFEITLELSCCKYPREEKLPLFWNDNKASLIEYIKQVHLGVKGQVFDQSGAPLPNVIVEVQDRKHICPFRTNKLGEYYLLLLPGSYVINVTVPGHDSYLTKLTIPGKSQPFSALKKDFHLPLRWQPDSISVSNPSCPMIPLYKFMPSHSAATKPSLGVFFMTLLYVFFK.

The N-terminal stretch at 1–17 (MDRARLWLGLLLPVVAA) is a signal peptide. A Peptidase M14 domain is found at 21 to 311 (RYHHQEGMEA…ASLIEYIKQV (291 aa)). An N-linked (GlcNAc...) asparagine glycan is attached at asparagine 38. Residues histidine 83 and glutamate 86 each coordinate Zn(2+). Cystine bridges form between cysteine 138–cysteine 285, cysteine 242–cysteine 284, and cysteine 341–cysteine 410. N-linked (GlcNAc...) asparagine glycosylation occurs at asparagine 164. Histidine 190 lines the Zn(2+) pocket. Glutamate 281 serves as the catalytic Proton donor/acceptor. A glycan (N-linked (GlcNAc...) asparagine) is linked at asparagine 363. Serine 423 carries GPI-anchor amidated serine lipidation. Positions 424–443 (AATKPSLGVFFMTLLYVFFK) are cleaved as a propeptide — removed in mature form.

This sequence belongs to the peptidase M14 family. Zn(2+) is required as a cofactor.

The protein resides in the cell membrane. The enzyme catalyses Cleavage of C-terminal arginine or lysine residues from polypeptides.. In terms of biological role, specifically removes C-terminal basic residues (Arg or Lys) from peptides and proteins. It is believed to play important roles in the control of peptide hormone and growth factor activity at the cell surface, and in the membrane-localized degradation of extracellular proteins. This is Carboxypeptidase M (Cpm) from Mus musculus (Mouse).